The primary structure comprises 104 residues: Translation initiation factor 1A (104 aa).

A compositionally biased stretch (low complexity) spans 1-14 (MRGQQAPPQQPTRV). Residues 1-20 (MRGQQAPPQQPTRVRTPREN) are disordered. The region spanning 12–87 (TRVRTPRENE…EKCDVIWRYT (76 aa)) is the S1-like domain.

This sequence belongs to the eIF-1A family.

Seems to be required for maximal rate of protein biosynthesis. Enhances ribosome dissociation into subunits and stabilizes the binding of the initiator Met-tRNA(I) to 40 S ribosomal subunits. The chain is Translation initiation factor 1A (eIF1A) from Methanococcus maripaludis (strain C6 / ATCC BAA-1332).